We begin with the raw amino-acid sequence, 1004 residues long: Protein phosphatase 1 regulatory subunit 12A (1004 aa).

The tract at residues 35 to 38 (KVKF) is important for interaction with PPP1CB. ANK repeat units lie at residues 39-68 (DDGA…DINY), 72-101 (DGLT…NINQ), 105-134 (EGWI…HVGA), 138-164 (EGDT…RQGV), 198-227 (SGGT…DVNI), and 231-260 (DGWT…DMEA). The span at 291-300 (HSEKREKKSP) shows a compositional bias: basic and acidic residues. Residues 291 to 920 (HSEKREKKSP…SYLEDRKPYC (630 aa)) are disordered. Residues 302–316 (IESTANLDNNQTQKT) are compositionally biased toward polar residues. Basic and acidic residues-rich tracts occupy residues 318 to 329 (KNKETLIMEQEK) and 336 to 353 (SLEH…KDES). Acidic residues predominate over residues 357-369 (SEEEEDDDSESEA). Over residues 378-392 (ANANTTSTQSASMTA) the composition is skewed to polar residues. Positions 417-427 (SPKEEERKDES) are enriched in basic and acidic residues. Residues 464-475 (RSASSPRLSSSL) show a composition bias toward low complexity. A compositionally biased stretch (basic and acidic residues) spans 476 to 486 (DNKEKEKDGKG). Low complexity predominate over residues 514–525 (SSASSIRSGSSY). The segment covering 528–538 (RKWEEDVKKNS) has biased composition (basic and acidic residues). Residues 539 to 554 (LNEGPTSLNTSYQRSG) show a composition bias toward polar residues. Composition is skewed to low complexity over residues 564–578 (VSSN…VTSS) and 587–602 (ASAN…STSA). Residues 613-624 (WAEDSTEKEKDS) show a composition bias toward basic and acidic residues. Over residues 625–659 (VPTAVTVPVAPSVVNAAATTTAMTTATSGTVSSTS) the composition is skewed to low complexity. A compositionally biased stretch (basic and acidic residues) spans 672-681 (VRDEESESQR). Basic residues predominate over residues 682–692 (KARSRQARQSR). Threonine 695 bears the Phosphothreonine; by ROCK2 mark. Basic and acidic residues predominate over residues 717 to 765 (RTREQENEEKEKEEKEKQDKEKQEEKKESETKDDDYRQRYSRTVEEPYH). Residues 770-793 (TSTSTSTSSTSSLSTSTSSLSSSS) are compositionally biased toward low complexity. Over residues 794-808 (QLNRPNSLIGITSAY) the composition is skewed to polar residues. Residues 812 to 837 (GTKESEREGGKKEEEKEEDKSQPKSI) are compositionally biased toward basic and acidic residues. The segment covering 838–849 (RERRRPREKRRS) has biased composition (basic residues). Phosphothreonine; by ROCK2 is present on threonine 850. The span at 864–880 (QEHQSDSEEGTNKKETQ) shows a compositional bias: basic and acidic residues. Positions 881-896 (SDSLSRYDTGSLSVSS) are enriched in polar residues.

In terms of assembly, PP1 comprises a catalytic subunit, PPP1CA, PPP1CB or PPP1CC, and one or several targeting or regulatory subunits. PPP1R12A mediates binding to myosin. In terms of processing, phosphorylated by CIT (Rho-associated kinase) and by ROCK2 on serine and threonine residues. Phosphorylation at Thr-695 leads to inhibition of myosin phosphatase activity. Phosphorylation at Thr-850 abolishes myosin binding. May be phosphorylated at Thr-695 by DMPK; may inhibit the myosin phosphatase activity. In terms of tissue distribution, detected in brain, lung, aorta, heart, gizzard, stomach, oviduct, spleen, kidney and small intestine.

It is found in the cytoplasm. It localises to the cytoskeleton. The protein resides in the stress fiber. Functionally, regulates myosin phosphatase activity. This chain is Protein phosphatase 1 regulatory subunit 12A (PPP1R12A), found in Gallus gallus (Chicken).